Reading from the N-terminus, the 990-residue chain is MKIVTYNQLQEAFRDYSPRDFAISRDNVFRVMRIYYNENVGQLVAFCNTQLAGRLAQFYFTIKMDLYSYKQCYNSHIFATCRNRCSSYNTFVAPGVKNVYMDKINVIKFKRNGSSFGEKAAALDKFLHNANRVHMQTPVIEGTYMRFRRAQRCRNNCVTDDARPFELERFADDFQVVNPATLTTKIEPVMACFDIETHSDGHNSSKPECDVIMCIGLAVLKDNRYDKICFVYHKELVEISGNDEYTHVVVFNNESHMIASFFDFFKYANPDVILDYNGDVFDLPYIRGRLKGDKPLLGRYDLPALQPNTKLFITKIGNRTDTYYFNYYIHIDLYKYFGADANKRDVENFELNTLSQYYLNDNKVDLNWQTMVAMYNNKQLGTMIDYNLKDCLLPIRLFNKLKLNDFMYSQCLMYRLCTDDFICNISHLISSTFFHLALTNTRTDPVTGLVVHDPYFFNKDDLGRMSSKDAGFCAGMSRLQRKRIPLKDLPANSIRLGAINEIVNYEGGKVLQPRAGVYEFAFSLDFNSLYLTIMIDICACLTNLILCEDGNVYLNQDKQAINVQLLLQLLKQRSELKKCRDSQTDSEFLYDLYDQMQNLSKRTANSIYGYYGIFCKLLANYITRVGREKLTAAIGMIEGLSNDAELLSKFNLSTLTFRVLYGDTDSTFVLPTFKRDEIPEESCMVTLTRICAAVETRVNGLFANGYKMAFENLMSVLILLKKKKYCYINSANKIVFKGWLVKKDMPVFMRVAFRTAIEQVLRHQDLQKCLDSLLINMLMYFDAFGTTKPLTDYSFSMTYNDGAGKVTENESRPTKRRVVTVARHCREILLNKGTDFVPGNGDRIPYVLLDIQGSVTQKAYPLRLFDPRTMRISWLKHMTILNTFMNELLEIFGDEHTSALNKCYDAILTKYMQHQAYDKKRVTLIKINAAYKRKAPSDDAARKRARAGPSALRKQKAASNDEDSSDEDDEDCSQAIGSNNTFKFSLYKYK.

Positions proline 936–isoleucine 976 are disordered. Residues asparagine 960–cysteine 972 show a composition bias toward acidic residues.

Belongs to the DNA polymerase type-B family.

It catalyses the reaction DNA(n) + a 2'-deoxyribonucleoside 5'-triphosphate = DNA(n+1) + diphosphate. Its function is as follows. Replicates the viral genome, host DNA polymerases cannot substitute for the viral enzyme in this process. This is DNA polymerase (POL) from Choristoneura fumiferana (Spruce budworm moth).